The primary structure comprises 676 residues: Multisubstrate pseudouridine synthase 7 (676 aa).

2 disordered regions span residues 1-27 (MSDS…AKKL) and 87-110 (KMPK…AARR). N-acetylserine is present on Ser2. Positions 94 to 110 (RSKEEVNAEKESEAARR) are enriched in basic and acidic residues. Asp256 (nucleophile) is an active-site residue. One can recognise a TRUD domain in the interval 338-582 (GFINYFGMQR…AGSYRTVIQK (245 aa)).

It belongs to the pseudouridine synthase TruD family.

The protein resides in the nucleus. The protein localises to the cytoplasm. It carries out the reaction uridine in 5S rRNA = pseudouridine in 5S rRNA. It catalyses the reaction uridine in snRNA = pseudouridine in snRNA. The catalysed reaction is uridine(13) in tRNA = pseudouridine(13) in tRNA. The enzyme catalyses a uridine in mRNA = a pseudouridine in mRNA. Catalyzes pseudouridylation at position 35 in U2 snRNA stem-loop II region which induces particular conformation of the mRNA-U2 snRNA duplex and places the nucleophile in an accessible position for the first step of splicing. Also catalyzes pseudouridylation at position 56 in U2 snRNA. Also catalyzes pseudouridylation at position 50 in 5S rRNA, position 13 in cytoplasmic tRNAs, and position 35 in pre-tRNA(Tyr). Pseudouridine residues in tRNAs may stabilize the local RNA conformation, favor interactions with protein partners and play an important role in the stabilization of the codon-anticodon interaction with mRNA. Also catalyzes pseudouridylation of mRNAs in response to heat shock: mediates pseudouridylation of mRNAs with the consensus sequence 5'-UGUAR-3'. The protein is Multisubstrate pseudouridine synthase 7 of Saccharomyces cerevisiae (strain ATCC 204508 / S288c) (Baker's yeast).